The primary structure comprises 174 residues: CEN-like protein 1 (174 aa).

The protein belongs to the phosphatidylethanolamine-binding protein family. In terms of tissue distribution, expressed in vegetative axillary meristems but not in the main shoot meristem.

It is found in the cytoplasm. May form complexes with phosphorylated ligands by interfering with kinases and their effectors. The sequence is that of CEN-like protein 1 (CET1) from Nicotiana tabacum (Common tobacco).